The chain runs to 381 residues: Cytochrome b (381 aa).

The next 4 membrane-spanning stretches (helical) occupy residues 34 to 54, 78 to 99, 114 to 134, and 179 to 199; these read FGSHLGLCLIIQILTGLFLAM, WLIRNIHANGASLFFICVYLHI, WNIGVILLFLLMATAFVGYVL, and FFAFHFLLPFLILALTVIHLL. 2 residues coordinate heme b: histidine 84 and histidine 98. Heme b contacts are provided by histidine 183 and histidine 197. Residue histidine 202 participates in a ubiquinone binding. Helical transmembrane passes span 227-247, 289-309, 321-341, and 348-368; these read YKDLLGFFVMIFFLAALALFM, LGGVLALLFSIFILMLVPLLH, MTQILFWFLVANSIILTWIGG, and FIMVGQIASISYFSLFLIIMP.

This sequence belongs to the cytochrome b family. The cytochrome bc1 complex contains 3 respiratory subunits (MT-CYB, CYC1 and UQCRFS1), 2 core proteins (UQCRC1 and UQCRC2) and probably 6 low-molecular weight proteins. Heme b is required as a cofactor.

The protein resides in the mitochondrion inner membrane. In terms of biological role, component of the ubiquinol-cytochrome c reductase complex (complex III or cytochrome b-c1 complex) that is part of the mitochondrial respiratory chain. The b-c1 complex mediates electron transfer from ubiquinol to cytochrome c. Contributes to the generation of a proton gradient across the mitochondrial membrane that is then used for ATP synthesis. This Carcharhinus porosus (Smalltail shark) protein is Cytochrome b (mt-cyb).